The primary structure comprises 410 residues: Centromere protein U (410 aa).

Residues 1–72 (MAARRSLRYS…YETFDPPLHS (72 aa)) form a disordered region. A Nuclear localization signal motif is present at residues 4 to 21 (RRSLRYSGDPGAKRSRNT). Positions 28 to 38 (RKQKAGQKPKR) are enriched in basic residues. Thr73 is modified (phosphothreonine; by PLK1). The tract at residues 87-228 (SSTSPATHRG…THSDASESMH (142 aa)) is disordered. Polar residues predominate over residues 101-115 (NLNPSENEASGNDSI). Phosphoserine occurs at positions 105, 110, 114, 130, 133, and 135. The span at 138–149 (DNVRRSVSIERP) shows a compositional bias: basic and acidic residues. A compositionally biased stretch (low complexity) spans 158–169 (PAAASSSSSPSE). Lys179 is covalently cross-linked (Glycyl lysine isopeptide (Lys-Gly) (interchain with G-Cter in SUMO2)). The residue at position 186 (Ser186) is a Phosphoserine. Thr191 carries the post-translational modification Phosphothreonine. Over residues 200–218 (TQKKVRPSPGRRKRPRRGS) the composition is skewed to basic residues. The residue at position 224 (Ser224) is a Phosphoserine. A coiled-coil region spans residues 289-352 (QMLKALKRKN…LKNSKHFLSN (64 aa)). Positions 295–312 (KRKNTKIISNMEKKRQRL) match the Nuclear localization signal motif.

The protein belongs to the CENP-U/AME1 family. As to quaternary structure, component of the CENPA-NAC complex, at least composed of CENPA, CENPC, CENPH, CENPM, CENPN, CENPT and CENPU. The CENPA-NAC complex interacts with the CENPA-CAD complex, composed of CENPI, CENPK, CENPL, CENPO, CENPP, CENPQ, CENPR and CENPS. Interacts with MLF1. Post-translationally, phosphorylated by PLK1 at Thr-73, creating a self-tethering site that specifically interacts with the polo-box domain of PLK1. In terms of tissue distribution, expressed at high levels in glioblastoma cell lines. Up-regulated in GBM (glioblastoma multiforme) tumors. Significantly increased in both the tumor core as well as the contralateral striatum and cortex in gliomas.

The protein resides in the cytoplasm. The protein localises to the nucleus. It is found in the chromosome. It localises to the centromere. Its subcellular location is the kinetochore. Component of the CENPA-NAC (nucleosome-associated) complex, a complex that plays a central role in assembly of kinetochore proteins, mitotic progression and chromosome segregation. The CENPA-NAC complex recruits the CENPA-CAD (nucleosome distal) complex and may be involved in incorporation of newly synthesized CENPA into centromeres. Plays an important role in the correct PLK1 localization to the mitotic kinetochores. A scaffold protein responsible for the initial recruitment and maintenance of the kinetochore PLK1 population until its degradation. Involved in transcriptional repression. The protein is Centromere protein U (Cenpu) of Rattus norvegicus (Rat).